The chain runs to 1201 residues: Zinc finger protein sdc-1 (1201 aa).

7 C2H2-type zinc fingers span residues leucine 117 to histidine 139, tyrosine 145 to cysteine 168, serine 233 to histidine 254, tyrosine 268 to histidine 290, isoleucine 486 to histidine 513, tyrosine 521 to cysteine 543, and valine 652 to histidine 674. The disordered stretch occupies residues lysine 1164–arginine 1201. Positions asparagine 1167–isoleucine 1176 are enriched in basic and acidic residues.

In terms of assembly, component of the SDC complex, which consists of sdc-1, sdc-2 and sdc-3. Within the complex, interacts with sdc-2 and sdc-3.

The protein localises to the nucleus. The protein resides in the chromosome. Functionally, embryonic transcription factor regulating downstream genes involved specifically in the sex determination and dosage compensation pathways, or regulating other genes involved in the coordinate control of both processes. Component of the SDC complex that functions in sex determination and in X chromosome dosage compensation specifically in hermaphrodite (XX) animals. Involved in the recruitment of the condensin I-like dosage compensation complex to the male sex-determining autosomal gene her-1, thereby contributing to its repression and initiating hermaphrodite sexual development. Similarly, might contribute to X-linked gene repression through recruitment of the dosage compensation complex to the X chromosomes in hermaphrodites. Seems to be involved in the depletion of histone H4 lysine 16 acetylation (H4K16ac) on dosage compensated X chromosomes. Plays a role in developmental rate and body fat regulation downstream of the TOR complex 2 pathway. The chain is Zinc finger protein sdc-1 (sdc-1) from Caenorhabditis elegans.